The following is a 391-amino-acid chain: Processive diacylglycerol beta-glucosyltransferase (391 aa).

It belongs to the glycosyltransferase 28 family. UgtP subfamily.

The protein resides in the cell membrane. It carries out the reaction a 1,2-diacyl-3-O-(beta-D-glucopyranosyl)-sn-glycerol + UDP-alpha-D-glucose = a 1,2-diacyl-3-O-(beta-D-Glc-(1-&gt;6)-beta-D-Glc)-sn-glycerol + UDP + H(+). It catalyses the reaction a 1,2-diacyl-sn-glycerol + UDP-alpha-D-glucose = a 1,2-diacyl-3-O-(beta-D-glucopyranosyl)-sn-glycerol + UDP + H(+). It participates in glycolipid metabolism; diglucosyl-diacylglycerol biosynthesis. In terms of biological role, processive glucosyltransferase involved in the biosynthesis of both the bilayer- and non-bilayer-forming membrane glucolipids. Is able to successively transfer two glucosyl residues to diacylglycerol (DAG), thereby catalyzing the formation of beta-monoglucosyl-DAG (3-O-(beta-D-glucopyranosyl)-1,2-diacyl-sn-glycerol) and beta-diglucosyl-DAG (3-O-(beta-D-glucopyranosyl-beta-(1-&gt;6)-D-glucopyranosyl)-1,2-diacyl-sn-glycerol). Beta-diglucosyl-DAG is the predominant glycolipid found in Bacillales and is also used as a membrane anchor for lipoteichoic acid (LTA). The chain is Processive diacylglycerol beta-glucosyltransferase from Staphylococcus aureus (strain MRSA252).